Consider the following 156-residue polypeptide: Small ribosomal subunit protein uS7 (156 aa).

It belongs to the universal ribosomal protein uS7 family. Part of the 30S ribosomal subunit. Contacts proteins S9 and S11.

One of the primary rRNA binding proteins, it binds directly to 16S rRNA where it nucleates assembly of the head domain of the 30S subunit. Is located at the subunit interface close to the decoding center, probably blocks exit of the E-site tRNA. The polypeptide is Small ribosomal subunit protein uS7 (Rhodobacter capsulatus (Rhodopseudomonas capsulata)).